The primary structure comprises 2266 residues: Little elongation complex subunit 1 (2266 aa).

Residues 23–186 are a coiled coil; the sequence is CASLQQNLNE…KQKNEKELRH (164 aa). Disordered stretches follow at residues 223–259 and 517–540; these read GEGS…PLRT and PAQE…KRPL. Positions 250–259 are enriched in polar residues; the sequence is PPTQGSPLRT. A phosphoserine mark is found at Ser255, Ser533, Ser558, and Ser589. The tract at residues 591–623 is disordered; sequence ELEKEKEDTQGFTLGESPESEDDDSGDGMDVAG. Positions 608–617 are enriched in acidic residues; sequence PESEDDDSGD. Ser707 bears the Phosphoserine mark. Thr832 is modified (phosphothreonine). A Phosphoserine modification is found at Ser925. The tract at residues 925–955 is disordered; the sequence is SPEVSASRRKLDFNSPGGSSPVENSDCSTNS. A compositionally biased stretch (polar residues) spans 940-955; it reads PGGSSPVENSDCSTNS. Ser958 carries the phosphoserine modification. Disordered regions lie at residues 977 to 1001 and 1107 to 1133; these read VQGD…HGSE and TEVE…QKNL. The span at 984–998 shows a compositional bias: polar residues; it reads QRQPQATDLDSSGTH. Lys1218 is subject to N6-acetyllysine. 3 disordered regions span residues 1295–1372, 1467–1510, and 1543–1707; these read TTEN…PSAL, AEKS…KSRL, and NSKL…SASE. 5 stretches are compositionally biased toward polar residues: residues 1306-1319, 1328-1344, 1487-1505, 1565-1588, and 1594-1605; these read RETT…SEPT, EGSS…NPQS, NNLS…STNF, NKPV…QSFS, and TKTQRSQTQTIL. Ser1588 carries the phosphoserine modification. 2 stretches are compositionally biased toward low complexity: residues 1609–1620 and 1637–1671; these read DTSTPTDCSPDT and APLI…QVSP. Ser1617 is modified (phosphoserine). Residue Thr1642 is modified to Phosphothreonine. Ser1692, Ser1697, Ser1699, Ser1701, Ser1712, Ser1838, and Ser1854 each carry phosphoserine. The segment at 1809-1902 is disordered; sequence TGSSSGGDCN…AVSAVSQLPL (94 aa). Positions 1825-1843 are enriched in polar residues; it reads LGTQQDSSGKRTLSTSTLR. Polar residues predominate over residues 1889–1901; that stretch reads CSSPAVSAVSQLP. Phosphoserine is present on Ser1903.

Belongs to the ICE1 family. In terms of assembly, component of the little elongation complex (LEC), at least composed of ELL (ELL, ELL2 or ELL3), ZC3H8, ICE1 and ICE2. Interacts (via N-terminus domain) with ELL. Interacts (via C-terminus domain) with ICE2 and ZC3H8.

The protein resides in the nucleus. It is found in the cajal body. Component of the little elongation complex (LEC), a complex required to regulate small nuclear RNA (snRNA) gene transcription by RNA polymerase II and III. Specifically acts as a scaffold protein that promotes the LEC complex formation and recruitment and RNA polymerase II occupancy at snRNA genes in subnuclear bodies. The polypeptide is Little elongation complex subunit 1 (ICE1) (Homo sapiens (Human)).